The primary structure comprises 739 residues: Phosphoribosylformylglycinamidine synthase subunit PurL (739 aa).

The active site involves H54. 2 residues coordinate ATP: Y57 and K96. E98 provides a ligand contact to Mg(2+). Substrate is bound by residues 99–102 (SHNH) and R121. H100 serves as the catalytic Proton acceptor. D122 serves as a coordination point for Mg(2+). Residue Q245 participates in substrate binding. D275 contacts Mg(2+). A substrate-binding site is contributed by 319–321 (ESQ). ATP is bound by residues D504 and G541. N542 provides a ligand contact to Mg(2+). S544 lines the substrate pocket.

This sequence belongs to the FGAMS family. In terms of assembly, monomer. Part of the FGAM synthase complex composed of 1 PurL, 1 PurQ and 2 PurS subunits.

It is found in the cytoplasm. It catalyses the reaction N(2)-formyl-N(1)-(5-phospho-beta-D-ribosyl)glycinamide + L-glutamine + ATP + H2O = 2-formamido-N(1)-(5-O-phospho-beta-D-ribosyl)acetamidine + L-glutamate + ADP + phosphate + H(+). It participates in purine metabolism; IMP biosynthesis via de novo pathway; 5-amino-1-(5-phospho-D-ribosyl)imidazole from N(2)-formyl-N(1)-(5-phospho-D-ribosyl)glycinamide: step 1/2. In terms of biological role, part of the phosphoribosylformylglycinamidine synthase complex involved in the purines biosynthetic pathway. Catalyzes the ATP-dependent conversion of formylglycinamide ribonucleotide (FGAR) and glutamine to yield formylglycinamidine ribonucleotide (FGAM) and glutamate. The FGAM synthase complex is composed of three subunits. PurQ produces an ammonia molecule by converting glutamine to glutamate. PurL transfers the ammonia molecule to FGAR to form FGAM in an ATP-dependent manner. PurS interacts with PurQ and PurL and is thought to assist in the transfer of the ammonia molecule from PurQ to PurL. The protein is Phosphoribosylformylglycinamidine synthase subunit PurL of Lactococcus lactis subsp. cremoris (Streptococcus cremoris).